We begin with the raw amino-acid sequence, 210 residues long: Glutathione S-transferase P (210 aa).

In terms of domain architecture, GST N-terminal spans 2–81; the sequence is PPYTVVYFPV…HLGRTLGLYG (80 aa). Y4 bears the Phosphotyrosine; by EGFR mark. Residues Y8, R14, W39, K45, and 52–53 contribute to the glutathione site; that span reads QL. Phosphothreonine is present on T62. 65-66 serves as a coordination point for glutathione; sequence QS. A GST C-terminal domain is found at 83–204; that stretch reads DQREAALVDM…ASPEHVNLPI (122 aa). N6-succinyllysine occurs at positions 103 and 116. K128 is subject to N6-acetyllysine.

The protein belongs to the GST superfamily. Pi family. In terms of assembly, homodimer. Interacts with CDK5.

It is found in the cytoplasm. The protein localises to the mitochondrion. The protein resides in the nucleus. The enzyme catalyses RX + glutathione = an S-substituted glutathione + a halide anion + H(+). It carries out the reaction prostaglandin J2 + glutathione = prostaglandin J2-S-(R)-glutathione. It catalyses the reaction prostaglandin J2 + glutathione = prostaglandin J2-S-(S)-glutathione. The catalysed reaction is prostaglandin A2 + glutathione = prostaglandin A2-S-(S)-glutathione. The enzyme catalyses 11(S)-hydroxy-14(S),15(S)-epoxy-(5Z,8Z,12E)-eicosatrienoate + glutathione = (11S,15S)-dihydroxy-14(R)-S-glutathionyl-(5Z,8Z,12E)-eicosatrienoate. Conjugation of reduced glutathione to a wide number of exogenous and endogenous hydrophobic electrophiles. Involved in the formation of glutathione conjugates of both prostaglandin A2 (PGA2) and prostaglandin J2 (PGJ2). Participates in the formation of novel hepoxilin regioisomers. Negatively regulates CDK5 activity via p25/p35 translocation to prevent neurodegeneration. This chain is Glutathione S-transferase P (GSTP1), found in Macaca mulatta (Rhesus macaque).